Here is a 706-residue protein sequence, read N- to C-terminus: MKIILTLLIILFSLNKNLNFVSSEVTKSRICSIFDQLPKLNSDFEPDYGDISVGMIKNVLEGDSPTLASNDPNFKPFVNGKLKNLNLFPTWFNKNHTQNVMLLKKLNLTLDKSSNIYSFVKDDFFPIDYQGWDVDESNRIYYGGRIFTAYHNFHYCLKINSVFFYQGTETFKFEGDDDVWVFIDKKLVLDLGGLHPARRGTVDLTKLGLQVNKTYSFDFFYCERHTPYSKMKIQTDIQAFCAWSDYCGVCQGDGSTCCNKDLDCDDDDPCTIDSCPLPNLPIPGGDKISKYCRHTNITCTQPSNNKCVITGCSKDTNGKCEVIGNLECADKSKYCMTLTGCDPKLGCQYKSNCIGPCLTGECNNGKCTSMDADYCSNELGEDPCKIYSCNAKNGGCMATPKCTSPSSSNPCVIPTCSADKGVCGTYTQNSTECNCNCKLNPCQKNNCDQSVNPPVCSPLPIDTIDDGNPCTIDICDKITGSVKHTPMECSGCTKCNNGKCIPIESNCDDGNLCTIDQCMNNGSCIHTPLSCNITNPCMDYTCNADIGCVGVPKICPNKGNCLIGYCDAGECKLKDRICDSPSFCQISQCSDVTGCIVFDKVCIPSNPKCETGVCINATSTEPGRCESVDFDPKPFVCKPAAIISTSVIVGVSVAAAVVAIAIVVASKKGYDAWAASNNNSLASLTSNPLYENPTGNGDNPMYQPNS.

The N-terminal stretch at 1 to 23 (MKIILTLLIILFSLNKNLNFVSS) is a signal peptide. Residues 24-644 (EVTKSRICSI…FVCKPAAIIS (621 aa)) are Extracellular-facing. N95, N107, N212, N296, N429, N521, N532, and N616 each carry an N-linked (GlcNAc...) asparagine glycan. Residues 109–253 (TLDKSSNIYS…SDYCGVCQGD (145 aa)) enclose the PA14 domain. A helical transmembrane segment spans residues 645–665 (TSVIVGVSVAAAVVAIAIVVA). Topologically, residues 666–706 (SKKGYDAWAASNNNSLASLTSNPLYENPTGNGDNPMYQPNS) are cytoplasmic. Residues 687–706 (NPLYENPTGNGDNPMYQPNS) are disordered. Residues 693–706 (PTGNGDNPMYQPNS) show a composition bias toward polar residues.

The protein belongs to the prespore-cell-inducing factor family.

The protein localises to the membrane. This is Protein psiG (psiG-1) from Dictyostelium discoideum (Social amoeba).